A 290-amino-acid polypeptide reads, in one-letter code: Microtubule-associated protein P320 (290 aa).

Repeats lie at residues 1-38 (SEYR…PIDP), 39-76 (SEYR…PIDP), 77-114 (SEYR…PIDP), 115-152 (SEYR…PIDP), 153-190 (SEYR…PIDP), 191-228 (SEYR…PIDP), 229-266 (SEYR…PIDP), and 267-290 (SEYR…DESH). The interval 251 to 290 (SHFLTTTHEAYKPIDPSEYRQKRTVGEEVTTDMRHVDESH) is disordered. Basic and acidic residues predominate over residues 259 to 290 (EAYKPIDPSEYRQKRTVGEEVTTDMRHVDESH).

It is found in the cytoplasm. Its subcellular location is the cytoskeleton. This chain is Microtubule-associated protein P320, found in Trypanosoma brucei brucei.